The primary structure comprises 183 residues: NEDD8-conjugating enzyme Ubc12 (183 aa).

Met-1 carries the N-acetylmethionine modification. A disordered region spans residues 1–28; it reads MIKLFSLKQQKKEEESAGGTKGSSKKAS. In terms of domain architecture, UBC core spans 29-173; it reads AAQLRIQKDI…VQRSMRGGYI (145 aa). Cys-111 functions as the Glycyl thioester intermediate in the catalytic mechanism.

This sequence belongs to the ubiquitin-conjugating enzyme family. UBC12 subfamily. In terms of processing, the acetylation of Met-1 increases affinity for DCUN1D1 by about 2 orders of magnitude and is crucial for NEDD8 transfer to cullins.

The enzyme catalyses [E1 NEDD8-activating enzyme]-S-[NEDD8 protein]-yl-L-cysteine + [E2 NEDD8-conjugating enzyme]-L-cysteine = [E1 NEDD8-activating enzyme]-L-cysteine + [E2 NEDD8-conjugating enzyme]-S-[NEDD8-protein]-yl-L-cysteine.. It functions in the pathway protein modification; protein neddylation. Its function is as follows. Accepts the ubiquitin-like protein NEDD8 from the UBA3-NAE1 E1 complex and catalyzes its covalent attachment to other proteins. The specific interaction with the E3 ubiquitin ligase rbx1, but not rbx2, suggests that the rbx1-ube2m complex neddylates specific target proteins, such as cul1, cul2, cul3 and cul4. Involved in cell proliferation. This is NEDD8-conjugating enzyme Ubc12 (ube2m) from Xenopus tropicalis (Western clawed frog).